Consider the following 269-residue polypeptide: Formamidopyrimidine-DNA glycosylase (269 aa).

Residue P2 is the Schiff-base intermediate with DNA of the active site. The active-site Proton donor is the E3. K57 functions as the Proton donor; for beta-elimination activity in the catalytic mechanism. The DNA site is built by H90, R109, and K150. The FPG-type zinc finger occupies 235-269; that stretch reads QVYGRKGEPCRVCGTPIVATKHAQRATFYCRQCQK. R259 acts as the Proton donor; for delta-elimination activity in catalysis.

The protein belongs to the FPG family. Monomer. Requires Zn(2+) as cofactor.

The enzyme catalyses Hydrolysis of DNA containing ring-opened 7-methylguanine residues, releasing 2,6-diamino-4-hydroxy-5-(N-methyl)formamidopyrimidine.. It carries out the reaction 2'-deoxyribonucleotide-(2'-deoxyribose 5'-phosphate)-2'-deoxyribonucleotide-DNA = a 3'-end 2'-deoxyribonucleotide-(2,3-dehydro-2,3-deoxyribose 5'-phosphate)-DNA + a 5'-end 5'-phospho-2'-deoxyribonucleoside-DNA + H(+). Functionally, involved in base excision repair of DNA damaged by oxidation or by mutagenic agents. Acts as a DNA glycosylase that recognizes and removes damaged bases. Has a preference for oxidized purines, such as 7,8-dihydro-8-oxoguanine (8-oxoG). Has AP (apurinic/apyrimidinic) lyase activity and introduces nicks in the DNA strand. Cleaves the DNA backbone by beta-delta elimination to generate a single-strand break at the site of the removed base with both 3'- and 5'-phosphates. This chain is Formamidopyrimidine-DNA glycosylase, found in Escherichia coli O7:K1 (strain IAI39 / ExPEC).